Reading from the N-terminus, the 373-residue chain is Transaldolase (373 aa).

Residue lysine 143 is the Schiff-base intermediate with substrate of the active site.

This sequence belongs to the transaldolase family. Type 2 subfamily.

It is found in the cytoplasm. It catalyses the reaction D-sedoheptulose 7-phosphate + D-glyceraldehyde 3-phosphate = D-erythrose 4-phosphate + beta-D-fructose 6-phosphate. It participates in carbohydrate degradation; pentose phosphate pathway; D-glyceraldehyde 3-phosphate and beta-D-fructose 6-phosphate from D-ribose 5-phosphate and D-xylulose 5-phosphate (non-oxidative stage): step 2/3. Its function is as follows. Transaldolase is important for the balance of metabolites in the pentose-phosphate pathway. The chain is Transaldolase (tal) from Mycobacterium bovis (strain ATCC BAA-935 / AF2122/97).